The primary structure comprises 178 residues: Bifunctional protein PyrR (178 aa).

Substrate is bound by residues 42–43 (TR), arginine 83, 103–111 (DDVIYKGRT), arginine 136, and valine 160. The short motif at 99-111 (VVLVDDVIYKGRT) is the PRPP-binding element.

It belongs to the purine/pyrimidine phosphoribosyltransferase family. PyrR subfamily.

The catalysed reaction is UMP + diphosphate = 5-phospho-alpha-D-ribose 1-diphosphate + uracil. Functionally, regulates the transcription of the pyrimidine nucleotide (pyr) operon in response to exogenous pyrimidines. In terms of biological role, also displays a weak uracil phosphoribosyltransferase activity which is not physiologically significant. The chain is Bifunctional protein PyrR from Synechocystis sp. (strain ATCC 27184 / PCC 6803 / Kazusa).